A 284-amino-acid polypeptide reads, in one-letter code: Tryptophan 2,3-dioxygenase (284 aa).

Substrate contacts are provided by residues 53-57 (FIIQH) and Arg119. His242 contacts heme. Thr256 is a substrate binding site.

This sequence belongs to the tryptophan 2,3-dioxygenase family. In terms of assembly, homotetramer. The cofactor is heme.

It carries out the reaction L-tryptophan + O2 = N-formyl-L-kynurenine. Its pathway is amino-acid degradation; L-tryptophan degradation via kynurenine pathway; L-kynurenine from L-tryptophan: step 1/2. It participates in siderophore biosynthesis; quinolobactin biosynthesis. Functionally, heme-dependent dioxygenase that catalyzes the oxidative cleavage of the L-tryptophan (L-Trp) pyrrole ring and converts L-tryptophan to N-formyl-L-kynurenine. Catalyzes the oxidative cleavage of the indole moiety. Required for synthesis of the siderophore quinolobactin. This chain is Tryptophan 2,3-dioxygenase, found in Pseudomonas fluorescens.